Reading from the N-terminus, the 375-residue chain is Alcohol dehydrogenase 6 (375 aa).

Residues C47, H69, C99, C102, C105, C113, and C175 each contribute to the Zn(2+) site. NAD(+)-binding positions include 200–205 (GLGGVG), D224, K229, 293–295 (VGS), and R370.

This sequence belongs to the zinc-containing alcohol dehydrogenase family. Class-V subfamily. Dimer. It depends on Zn(2+) as a cofactor. As to expression, liver.

The protein localises to the cytoplasm. The catalysed reaction is a primary alcohol + NAD(+) = an aldehyde + NADH + H(+). It carries out the reaction a secondary alcohol + NAD(+) = a ketone + NADH + H(+). In terms of biological role, alcohol dehydrogenase. Catalyzes the NAD-dependent oxidation of primary alcohols to the corresponding aldehydes. Oxidizes secondary alcohols to the corresponding ketones. The protein is Alcohol dehydrogenase 6 (ADH6) of Peromyscus maniculatus (North American deer mouse).